We begin with the raw amino-acid sequence, 130 residues long: Glycine cleavage system H protein (130 aa).

The Lipoyl-binding domain occupies 22–103; the sequence is KAYIGISDCA…PYGSWIIAVE (82 aa). Lys63 is modified (N6-lipoyllysine).

This sequence belongs to the GcvH family. As to quaternary structure, the glycine cleavage system is composed of four proteins: P, T, L and H. It depends on (R)-lipoate as a cofactor.

The glycine cleavage system catalyzes the degradation of glycine. The H protein shuttles the methylamine group of glycine from the P protein to the T protein. The protein is Glycine cleavage system H protein of Clostridium botulinum (strain Kyoto / Type A2).